The sequence spans 414 residues: Multifunctional CCA protein (414 aa).

ATP-binding residues include Gly-8 and Arg-11. The CTP site is built by Gly-8 and Arg-11. Mg(2+)-binding residues include Asp-21 and Asp-23. The ATP site is built by Arg-91, Arg-137, and Arg-140. 3 residues coordinate CTP: Arg-91, Arg-137, and Arg-140. The HD domain maps to 228–329 (TGIHTLMTLA…LKLFDAVDVW (102 aa)).

This sequence belongs to the tRNA nucleotidyltransferase/poly(A) polymerase family. Bacterial CCA-adding enzyme type 1 subfamily. As to quaternary structure, monomer. Can also form homodimers and oligomers. Requires Mg(2+) as cofactor. Ni(2+) serves as cofactor.

It catalyses the reaction a tRNA precursor + 2 CTP + ATP = a tRNA with a 3' CCA end + 3 diphosphate. The catalysed reaction is a tRNA with a 3' CCA end + 2 CTP + ATP = a tRNA with a 3' CCACCA end + 3 diphosphate. Its function is as follows. Catalyzes the addition and repair of the essential 3'-terminal CCA sequence in tRNAs without using a nucleic acid template. Adds these three nucleotides in the order of C, C, and A to the tRNA nucleotide-73, using CTP and ATP as substrates and producing inorganic pyrophosphate. tRNA 3'-terminal CCA addition is required both for tRNA processing and repair. Also involved in tRNA surveillance by mediating tandem CCA addition to generate a CCACCA at the 3' terminus of unstable tRNAs. While stable tRNAs receive only 3'-terminal CCA, unstable tRNAs are marked with CCACCA and rapidly degraded. The protein is Multifunctional CCA protein of Serratia proteamaculans (strain 568).